A 319-amino-acid polypeptide reads, in one-letter code: 4-hydroxy-3-methylbut-2-enyl diphosphate reductase (319 aa).

Cysteine 17 serves as a coordination point for [4Fe-4S] cluster. Positions 46 and 79 each coordinate (2E)-4-hydroxy-3-methylbut-2-enyl diphosphate. The dimethylallyl diphosphate site is built by histidine 46 and histidine 79. Residues histidine 46 and histidine 79 each contribute to the isopentenyl diphosphate site. Position 101 (cysteine 101) interacts with [4Fe-4S] cluster. Histidine 129 contributes to the (2E)-4-hydroxy-3-methylbut-2-enyl diphosphate binding site. Histidine 129 provides a ligand contact to dimethylallyl diphosphate. Isopentenyl diphosphate is bound at residue histidine 129. Residue glutamate 131 is the Proton donor of the active site. Threonine 170 serves as a coordination point for (2E)-4-hydroxy-3-methylbut-2-enyl diphosphate. Cysteine 200 provides a ligand contact to [4Fe-4S] cluster. (2E)-4-hydroxy-3-methylbut-2-enyl diphosphate is bound by residues serine 228, serine 229, asparagine 230, and serine 273. 4 residues coordinate dimethylallyl diphosphate: serine 228, serine 229, asparagine 230, and serine 273. 4 residues coordinate isopentenyl diphosphate: serine 228, serine 229, asparagine 230, and serine 273.

This sequence belongs to the IspH family. [4Fe-4S] cluster is required as a cofactor.

The enzyme catalyses isopentenyl diphosphate + 2 oxidized [2Fe-2S]-[ferredoxin] + H2O = (2E)-4-hydroxy-3-methylbut-2-enyl diphosphate + 2 reduced [2Fe-2S]-[ferredoxin] + 2 H(+). The catalysed reaction is dimethylallyl diphosphate + 2 oxidized [2Fe-2S]-[ferredoxin] + H2O = (2E)-4-hydroxy-3-methylbut-2-enyl diphosphate + 2 reduced [2Fe-2S]-[ferredoxin] + 2 H(+). The protein operates within isoprenoid biosynthesis; dimethylallyl diphosphate biosynthesis; dimethylallyl diphosphate from (2E)-4-hydroxy-3-methylbutenyl diphosphate: step 1/1. It participates in isoprenoid biosynthesis; isopentenyl diphosphate biosynthesis via DXP pathway; isopentenyl diphosphate from 1-deoxy-D-xylulose 5-phosphate: step 6/6. In terms of biological role, catalyzes the conversion of 1-hydroxy-2-methyl-2-(E)-butenyl 4-diphosphate (HMBPP) into a mixture of isopentenyl diphosphate (IPP) and dimethylallyl diphosphate (DMAPP). Acts in the terminal step of the DOXP/MEP pathway for isoprenoid precursor biosynthesis. This chain is 4-hydroxy-3-methylbut-2-enyl diphosphate reductase, found in Cereibacter sphaeroides (strain ATCC 17029 / ATH 2.4.9) (Rhodobacter sphaeroides).